The following is a 403-amino-acid chain: S-adenosylmethionine synthase (403 aa).

H16 is an ATP binding site. D18 is a binding site for Mg(2+). A K(+)-binding site is contributed by E44. L-methionine is bound by residues E57 and Q100. Residues 100-110 (QSPDIAQGVDR) are flexible loop. The tract at residues 106-126 (QGVDRSYESRSGSASTDAHDL) is disordered. Residues 176 to 178 (DGK), 248 to 249 (KF), D257, 263 to 264 (RK), A280, and K284 each bind ATP. Residue D257 participates in L-methionine binding. K288 serves as a coordination point for L-methionine.

It belongs to the AdoMet synthase family. Homotetramer; dimer of dimers. Mg(2+) is required as a cofactor. The cofactor is K(+).

Its subcellular location is the cytoplasm. It carries out the reaction L-methionine + ATP + H2O = S-adenosyl-L-methionine + phosphate + diphosphate. It functions in the pathway amino-acid biosynthesis; S-adenosyl-L-methionine biosynthesis; S-adenosyl-L-methionine from L-methionine: step 1/1. Catalyzes the formation of S-adenosylmethionine (AdoMet) from methionine and ATP. The overall synthetic reaction is composed of two sequential steps, AdoMet formation and the subsequent tripolyphosphate hydrolysis which occurs prior to release of AdoMet from the enzyme. This Clavibacter sepedonicus (Clavibacter michiganensis subsp. sepedonicus) protein is S-adenosylmethionine synthase.